The chain runs to 316 residues: MGKPGRVNQTTVSDFLLLGLSEWPEEQPLLFGIFLGMYLVTMVGNLLIILAISSDPHLHTPMYFFLANLSLTDACFTSASIPKMLANIHTQSQIISYSGCLAQLYFLLMFGGLDNCLLAVMAYDRYVAICQPLHYSTSMSPQLCALMLGVCWVLTNCPALMHTLLLTRVAFCAQKAIPHFYCDPSALLKLACSDTHVNELMIITMGLLFLTVPLLLIVFSYVRIFWAVFVISSPGGRWKAFSTCGSHLTVVLLFYGSLMGVYLLPPSTYSTERESRAAVLYMVIIPTLNPFIYSLRNRDMKEALGKLFVSGKTFFL.

Residues 1–28 (MGKPGRVNQTTVSDFLLLGLSEWPEEQP) lie on the Extracellular side of the membrane. N8 is a glycosylation site (N-linked (GlcNAc...) asparagine). Residues 29-49 (LLFGIFLGMYLVTMVGNLLII) form a helical membrane-spanning segment. At 50 to 60 (LAISSDPHLHT) the chain is on the cytoplasmic side. Residues 61 to 81 (PMYFFLANLSLTDACFTSASI) form a helical membrane-spanning segment. The Extracellular segment spans residues 82 to 100 (PKMLANIHTQSQIISYSGC). Residues C100 and C182 are joined by a disulfide bond. Residues 101–121 (LAQLYFLLMFGGLDNCLLAVM) form a helical membrane-spanning segment. At 122-145 (AYDRYVAICQPLHYSTSMSPQLCA) the chain is on the cytoplasmic side. The helical transmembrane segment at 146-166 (LMLGVCWVLTNCPALMHTLLL) threads the bilayer. Residues 167-199 (TRVAFCAQKAIPHFYCDPSALLKLACSDTHVNE) lie on the Extracellular side of the membrane. Residues 200–220 (LMIITMGLLFLTVPLLLIVFS) form a helical membrane-spanning segment. The Cytoplasmic segment spans residues 221–243 (YVRIFWAVFVISSPGGRWKAFST). Residues 244–264 (CGSHLTVVLLFYGSLMGVYLL) form a helical membrane-spanning segment. Topologically, residues 265–274 (PPSTYSTERE) are extracellular. Residues 275–295 (SRAAVLYMVIIPTLNPFIYSL) traverse the membrane as a helical segment. Residues 296–316 (RNRDMKEALGKLFVSGKTFFL) are Cytoplasmic-facing.

It belongs to the G-protein coupled receptor 1 family.

The protein resides in the membrane. In terms of biological role, odorant receptor. This chain is Olfactory receptor 1N2 (OR1N2), found in Homo sapiens (Human).